Reading from the N-terminus, the 112-residue chain is Gastrula zinc finger protein XlCGF16.1 (112 aa).

4 consecutive C2H2-type zinc fingers follow at residues 6–28 (YNCS…QKTH), 34–56 (FVCF…QRIH), 62–84 (FSCT…HKTH), and 90–112 (FLCF…HRTH).

It belongs to the krueppel C2H2-type zinc-finger protein family.

The protein localises to the nucleus. In terms of biological role, may be involved in transcriptional regulation. This is Gastrula zinc finger protein XlCGF16.1 from Xenopus laevis (African clawed frog).